An 813-amino-acid chain; its full sequence is Serine/threonine-protein kinase kin-29 (813 aa).

Residues 18 to 269 enclose the Protein kinase domain; sequence YDVGRAIGKG…IQNVLAHRWM (252 aa). ATP-binding positions include 24-32 and K47; that span reads IGKGNFATV. The active-site Proton acceptor is the D140. Residues 383–412 form a disordered region; the sequence is LSSPDCDSDDSSNSDLCDESPLSSLEPNHK. A compositionally biased stretch (acidic residues) spans 388-400; it reads CDSDDSSNSDLCD.

It belongs to the protein kinase superfamily. CAMK Ser/Thr protein kinase family. SNF1 subfamily. In terms of assembly, interacts with tax-6. The cofactor is Mg(2+). In terms of processing, autophosphorylated. Elevated cAMP levels appears to act via PKA to directly or indirectly phosphorylate multiple sites on kin-29 and inhibit function.

It localises to the cytoplasm. The protein localises to the nucleus. It carries out the reaction L-seryl-[protein] + ATP = O-phospho-L-seryl-[protein] + ADP + H(+). It catalyses the reaction L-threonyl-[protein] + ATP = O-phospho-L-threonyl-[protein] + ADP + H(+). Functionally, regulates chemoreceptor expression by phosphorylating the hda-4 class II histone deacetylase (HDAC) and inhibiting the gene repression functions of hda-4 and the mef-2 transcription factor, enabling the correct sensing and transduction of food signals. Role in determining body size, the dauer decision and serotonin-mediated egg laying. May modulate the Sma/Mab pathway and regulates development in the later larval stages. The protein is Serine/threonine-protein kinase kin-29 of Caenorhabditis briggsae.